The following is a 473-amino-acid chain: Lysophospholipid acyltransferase 5 (473 aa).

4 consecutive transmembrane segments (helical) span residues 20–40 (LLISVLAGYPLAVVHRTFFYN), 43–63 (AQHQHLFFVIVGLSLWMFNCG), 66–86 (VIHPILSIFGAFFITNFMAGT), and 88–108 (ASIYAAHIVFLGHLLIGYWFH). Residues Asn-315 and His-351 contribute to the active site. The next 3 helical transmembrane spans lie at 341–361 (VITLSYLAIWHGYHLGYFLLF), 396–416 (FIWIFGKLTISYSMGFAFLMF), and 431–451 (LYFIGFIIYFIVWPILHMVLL). The Di-lysine motif signature appears at 470–473 (KKEL).

Belongs to the membrane-bound acyltransferase family.

Its subcellular location is the endoplasmic reticulum membrane. It catalyses the reaction a 1-acyl-sn-glycero-3-phosphocholine + an acyl-CoA = a 1,2-diacyl-sn-glycero-3-phosphocholine + CoA. The enzyme catalyses a 1-acyl-sn-glycero-3-phospho-L-serine + an acyl-CoA = a 1,2-diacyl-sn-glycero-3-phospho-L-serine + CoA. It carries out the reaction a 1-acyl-sn-glycero-3-phosphoethanolamine + an acyl-CoA = a 1,2-diacyl-sn-glycero-3-phosphoethanolamine + CoA. Its pathway is lipid metabolism; phospholipid metabolism. Its function is as follows. Probable acyltransferase which may mediate the conversion of lysophosphatidylcholine (1-acyl-sn-glycero-3-phosphocholine or LPC) into phosphatidylcholine (1,2-diacyl-sn-glycero-3-phosphocholine or PC) (LPCAT activity). May also catalyze the conversion of lysophosphatidylethanolamine (1-acyl-2-hydroxy-sn-glycero-3-phosphoethanolamine or LPE) into phosphatidylethanolamine (1,2-diacyl-sn-glycero-3-phosphoethanolamine or PE) (LPEAT activity), as well as the conversion of lysophosphatidylserine (1-acyl-2-hydroxy-sn-glycero-3-phospho-L-serine or LPS) into phosphatidylserine (1,2-diacyl-sn-glycero-3-phospho-L-serine or PS) (LPSAT activity). Required for incorporation of arachidonic acid into PC, PE, and PS. This Caenorhabditis elegans protein is Lysophospholipid acyltransferase 5 (mboa-6).